A 149-amino-acid polypeptide reads, in one-letter code: Large ribosomal subunit protein bL9 (149 aa).

The protein belongs to the bacterial ribosomal protein bL9 family.

Its function is as follows. Binds to the 23S rRNA. This chain is Large ribosomal subunit protein bL9, found in Haemophilus influenzae (strain PittEE).